We begin with the raw amino-acid sequence, 298 residues long: U1 small nuclear ribonucleoprotein A (298 aa).

2 RRM domains span residues 2-113 and 227-298; these read SALY…KART and KVLL…GFAK.

Belongs to the RRM U1 A/B'' family. In terms of assembly, component of the spliceosome where it is associated with snRNP U1.

The protein localises to the nucleus. In terms of biological role, involved in nuclear mRNA splicing. The principal role of the U1A is to help fold or maintain U1 RNA in an active configuration. It is the first snRNP to interact with pre-mRNA. This interaction is required for the subsequent binding of U2 snRNP and the U4/U6/U5 tri-snRNP. The protein is U1 small nuclear ribonucleoprotein A (MUD1) of Saccharomyces cerevisiae (strain ATCC 204508 / S288c) (Baker's yeast).